The chain runs to 260 residues: HTH-type transcriptional repressor NanR (260 aa).

Positions 1–22 (MNAFDSQAEDSPTSLGRSLRRR) are disordered. Positions 27-95 (KKLSEMVEEE…NGERARVSRP (69 aa)) constitute an HTH gntR-type domain. Positions 55–74 (ERELMAFFNVGRPSVREALA) form a DNA-binding region, H-T-H motif.

This sequence belongs to the NanR family.

Its function is as follows. Transcriptional repressor that controls expression of the genes required for the catabolism of sialic acids. This is HTH-type transcriptional repressor NanR from Salmonella newport (strain SL254).